The following is a 256-amino-acid chain: Ciliary microtubule associated protein 1A (256 aa).

STPGR repeat units lie at residues 66–92 (PGPGYLVPSNITVKGKDGTPAYSIYGR), 181–206 (PGPGTYRVIDPGTYKHKPPQYSMTAR), and 217–242 (PGPGAYSPEKVVMSKAQAPNFSFGIR). Positions 91 to 115 (GRPRDISSFRTPGPGSYSPERAGKS) are disordered.

Belongs to the CIMAP family.

The protein resides in the cytoplasm. The protein localises to the cytoskeleton. Its subcellular location is the flagellum axoneme. Outer dense fibers are filamentous structures located on the outside of the axoneme in the midpiece and principal piece of the mammalian sperm tail. May help to maintain the passive elastic structures and elastic recoil of the sperm tail. In Xenopus laevis (African clawed frog), this protein is Ciliary microtubule associated protein 1A (cimap1a).